Consider the following 437-residue polypeptide: Phosphoglucosamine mutase (437 aa).

Serine 101 (phosphoserine intermediate) is an active-site residue. 4 residues coordinate Mg(2+): serine 101, aspartate 234, aspartate 236, and aspartate 238. At serine 101 the chain carries Phosphoserine.

The protein belongs to the phosphohexose mutase family. Requires Mg(2+) as cofactor. Activated by phosphorylation.

The catalysed reaction is alpha-D-glucosamine 1-phosphate = D-glucosamine 6-phosphate. Functionally, catalyzes the conversion of glucosamine-6-phosphate to glucosamine-1-phosphate. This Thermus thermophilus (strain ATCC BAA-163 / DSM 7039 / HB27) protein is Phosphoglucosamine mutase.